The following is a 397-amino-acid chain: Acetate kinase (397 aa).

Asn7 is a Mg(2+) binding site. An ATP-binding site is contributed by Lys14. Arg91 is a binding site for substrate. Residue Asp148 is the Proton donor/acceptor of the active site. ATP is bound by residues 208–212 (HLGNG), 283–285 (DFR), and 331–335 (GIGEN). Glu384 is a Mg(2+) binding site.

The protein belongs to the acetokinase family. Homodimer. Requires Mg(2+) as cofactor. The cofactor is Mn(2+).

It localises to the cytoplasm. The enzyme catalyses acetate + ATP = acetyl phosphate + ADP. Its pathway is metabolic intermediate biosynthesis; acetyl-CoA biosynthesis; acetyl-CoA from acetate: step 1/2. Catalyzes the formation of acetyl phosphate from acetate and ATP. Can also catalyze the reverse reaction. This is Acetate kinase from Treponema denticola (strain ATCC 35405 / DSM 14222 / CIP 103919 / JCM 8153 / KCTC 15104).